The primary structure comprises 128 residues: L-ectoine synthase (128 aa).

Belongs to the ectoine synthase family.

It carries out the reaction (2S)-4-acetamido-2-aminobutanoate = L-ectoine + H2O. It functions in the pathway amine and polyamine biosynthesis; ectoine biosynthesis; L-ectoine from L-aspartate 4-semialdehyde: step 3/3. In terms of biological role, catalyzes the circularization of gamma-N-acetyl-alpha,gamma-diaminobutyric acid (ADABA) to ectoine (1,4,5,6-tetrahydro-2-methyl-4-pyrimidine carboxylic acid), which is an excellent osmoprotectant. In Oceanobacillus iheyensis (strain DSM 14371 / CIP 107618 / JCM 11309 / KCTC 3954 / HTE831), this protein is L-ectoine synthase.